The sequence spans 350 residues: Probable flap endonuclease 1 homolog (350 aa).

Residues 1–95 (MGITKLAHLI…AVLEKRAQST (95 aa)) form an N-domain region. Mg(2+) is bound at residue Asp-34. Arg-61 provides a ligand contact to DNA. Residues Asp-77, Glu-130, Glu-132, Asp-151, and Asp-153 each coordinate Mg(2+). Positions 110-223 (NQECLRLLHL…SRALKLIKEH (114 aa)) are I-domain. Residue Glu-130 coordinates DNA. The DNA site is built by Gly-201 and Asp-203. Asp-203 contributes to the Mg(2+) binding site. Positions 317–325 (RQSRLEDFF) are interaction with PCNA.

This sequence belongs to the XPG/RAD2 endonuclease family. FEN1 subfamily. As to quaternary structure, interacts with PCNA. Three molecules of fen1 bind to one PCNA trimer with each molecule binding to one PCNA monomer. PCNA stimulates the nuclease activity without altering cleavage specificity. The cofactor is Mg(2+). In terms of processing, phosphorylated. Phosphorylation upon DNA damage induces relocalization to the nuclear plasma.

The protein resides in the nucleus. Its subcellular location is the nucleolus. The protein localises to the nucleoplasm. It is found in the mitochondrion. Structure-specific nuclease with 5'-flap endonuclease and 5'-3' exonuclease activities involved in DNA replication and repair. During DNA replication, cleaves the 5'-overhanging flap structure that is generated by displacement synthesis when DNA polymerase encounters the 5'-end of a downstream Okazaki fragment. It enters the flap from the 5'-end and then tracks to cleave the flap base, leaving a nick for ligation. Also involved in the long patch base excision repair (LP-BER) pathway, by cleaving within the apurinic/apyrimidinic (AP) site-terminated flap. Acts as a genome stabilization factor that prevents flaps from equilibrating into structures that lead to duplications and deletions. Also possesses 5'-3' exonuclease activity on nicked or gapped double-stranded DNA, and exhibits RNase H activity. Also involved in replication and repair of rDNA and in repairing mitochondrial DNA. In Danio rerio (Zebrafish), this protein is Probable flap endonuclease 1 homolog.